The following is a 428-amino-acid chain: Tyrosine--tRNA ligase (428 aa).

Tyr-41 contributes to the L-tyrosine binding site. Positions 46–55 (PTADSLHLGH) match the 'HIGH' region motif. Residues Tyr-179 and Gln-183 each contribute to the L-tyrosine site. Positions 239-243 (KFGKT) match the 'KMSKS' region motif. Lys-242 is a binding site for ATP. An S4 RNA-binding domain is found at 361 to 418 (ADLLQALVDSELQPSRGQARKTVASNAVTINGEKQADPEYVFSDSDRLFGRYTLLRRG).

The protein belongs to the class-I aminoacyl-tRNA synthetase family. TyrS type 1 subfamily. As to quaternary structure, homodimer.

Its subcellular location is the cytoplasm. The enzyme catalyses tRNA(Tyr) + L-tyrosine + ATP = L-tyrosyl-tRNA(Tyr) + AMP + diphosphate + H(+). Catalyzes the attachment of tyrosine to tRNA(Tyr) in a two-step reaction: tyrosine is first activated by ATP to form Tyr-AMP and then transferred to the acceptor end of tRNA(Tyr). The chain is Tyrosine--tRNA ligase from Klebsiella pneumoniae subsp. pneumoniae (strain ATCC 700721 / MGH 78578).